A 115-amino-acid polypeptide reads, in one-letter code: Ribonuclease P protein component (115 aa).

The protein belongs to the RnpA family. Consists of a catalytic RNA component (M1 or rnpB) and a protein subunit.

It catalyses the reaction Endonucleolytic cleavage of RNA, removing 5'-extranucleotides from tRNA precursor.. Functionally, RNaseP catalyzes the removal of the 5'-leader sequence from pre-tRNA to produce the mature 5'-terminus. It can also cleave other RNA substrates such as 4.5S RNA. The protein component plays an auxiliary but essential role in vivo by binding to the 5'-leader sequence and broadening the substrate specificity of the ribozyme. This chain is Ribonuclease P protein component, found in Bacillus cereus (strain Q1).